A 630-amino-acid polypeptide reads, in one-letter code: UvrABC system protein C (630 aa).

The interval 1–96 is disordered; it reads MGAEGLQGEG…GEAHRRGGTG (96 aa). A compositionally biased stretch (low complexity) spans 9-28; the sequence is EGEVPPQGAGVPGQVQVGVH. A GIY-YIG domain is found at 52–125; it reads DPRGLPVEAG…IKAHRPLYNV (74 aa). The span at 75–91 shows a compositional bias: basic and acidic residues; it reads RPGEKLLPRRGQGEAHR. One can recognise a UVR domain in the interval 234-269; sequence DGLLQELEAKMREAARRLEFERAAEIRDQMEALRAF.

Belongs to the UvrC family. Interacts with UvrB in an incision complex.

It localises to the cytoplasm. Its function is as follows. The UvrABC repair system catalyzes the recognition and processing of DNA lesions. UvrC both incises the 5' and 3' sides of the lesion. The N-terminal half is responsible for the 3' incision and the C-terminal half is responsible for the 5' incision. The protein is UvrABC system protein C of Thermus thermophilus (strain ATCC BAA-163 / DSM 7039 / HB27).